The primary structure comprises 609 residues: Arginine--tRNA ligase (609 aa).

The 'HIGH' region motif lies at 132-142 (ANPTSSLHVGH).

The protein belongs to the class-I aminoacyl-tRNA synthetase family. As to quaternary structure, monomer.

Its subcellular location is the cytoplasm. The enzyme catalyses tRNA(Arg) + L-arginine + ATP = L-arginyl-tRNA(Arg) + AMP + diphosphate. The polypeptide is Arginine--tRNA ligase (Psychrobacter sp. (strain PRwf-1)).